Here is a 534-residue protein sequence, read N- to C-terminus: Cytochrome c oxidase subunit 1 (534 aa).

At 1–14 (MVQRWLYSTNAKDI) the chain is on the mitochondrial matrix side. The chain crosses the membrane as a helical span at residues 15 to 39 (AVLYFMLAIFSGMAGTAMSLIIRLE). Positions 39, 42, and 44 each coordinate Ca(2+). The Mitochondrial intermembrane portion of the chain corresponds to 40–54 (LAAPGSQYLHGNSQL). A helical membrane pass occupies residues 55-88 (FNVLVVGHAVLMIFFLVMPALIGGFGNYLLPLMI). His-62 lines the Fe(II)-heme a pocket. The Mitochondrial matrix segment spans residues 89–97 (GATDTAFPR). Residues 98 to 118 (INNIAFWVLPMGLVCLVTSTL) traverse the membrane as a helical segment. The Mitochondrial intermembrane segment spans residues 119-142 (VESGAGTGWTVYPPLSSIQAHSGP). A helical membrane pass occupies residues 143 to 171 (SVDLAIFALHLTSISSLLGAINFIVTTLN). The Mitochondrial matrix segment spans residues 172-183 (MRTNGMTMHKLP). A helical membrane pass occupies residues 184 to 215 (LFVWSIFITAFLLLLSLPVLSAGITMLLLDRN). Residues 216–228 (FNTSFFEVSGGGD) lie on the Mitochondrial intermembrane side of the membrane. The helical transmembrane segment at 229 to 263 (PILYEHLFWFFGHPEVYILIIPGFGIISHVVSTYS) threads the bilayer. His-241 lines the Cu cation pocket. Residues 241 to 245 (HPEVY) constitute a cross-link (1'-histidyl-3'-tyrosine (His-Tyr)). Tyr-245 is an O2 binding site. The Mitochondrial matrix segment spans residues 264–269 (KKPVFG). Residues 270–295 (EISMVYAMASIGLLGFLVWSHHMYIV) traverse the membrane as a helical segment. Positions 290 and 291 each coordinate Cu cation. The Mitochondrial intermembrane portion of the chain corresponds to 296–298 (GLD). Residues 299-327 (ADTRAYFTSATMIIAIPTGIKIFSWLATI) traverse the membrane as a helical segment. Over 328 to 335 (HGGSIRLA) the chain is Mitochondrial matrix. A helical transmembrane segment spans residues 336 to 358 (TPMLYAIAFLFLFTMGGLTGVAL). Residues 359–370 (ANASLDVAFHDT) lie on the Mitochondrial intermembrane side of the membrane. Residues His-368 and Asp-369 each coordinate Mg(2+). The helical transmembrane segment at 371 to 400 (YYVVGHFHYVLSMGAIFSLFAGYYYWSPQI) threads the bilayer. Residue His-376 participates in heme a3 binding. His-378 is a binding site for Fe(II)-heme a. At 401–406 (LGLNYN) the chain is on the mitochondrial matrix side. A helical membrane pass occupies residues 407-431 (EKLAQIQFWLIFIGANVIFFPMHFL). The Mitochondrial intermembrane portion of the chain corresponds to 432-449 (GINGMPRRIPDYPDAFAG). Pro-441 provides a ligand contact to Ca(2+). A helical transmembrane segment spans residues 450–474 (WNYVASIGSFIATLSLFLFIYILYD). The Mitochondrial matrix segment spans residues 475 to 534 (QLVNGLNNKVNNKSVIYNKAPDFVESNTIFNLNTVKSSSIEFLLTSPPAVHSFNTPAVQS).

This sequence belongs to the heme-copper respiratory oxidase family. As to quaternary structure, component of the cytochrome c oxidase (complex IV, CIV), a multisubunit enzyme composed of 12 subunits. The complex is composed of a catalytic core of 3 subunits COX1, COX2 and COX3, encoded in the mitochondrial DNA, and 9 supernumerary subunits COX4, COX5A (or COX5B), COX6, COX7, COX8, COX9, COX12, COX13 and COX26, which are encoded in the nuclear genome. The complex exists as a monomer or a dimer and forms supercomplexes (SCs) in the inner mitochondrial membrane with a dimer of ubiquinol-cytochrome c oxidoreductase (cytochrome b-c1 complex, complex III, CIII), resulting in 2 different assemblies (supercomplexes III(2)IV and III(2)IV(2)). The cofactor is heme. Requires Cu cation as cofactor. Post-translationally, the N-terminus is blocked.

It is found in the mitochondrion inner membrane. The catalysed reaction is 4 Fe(II)-[cytochrome c] + O2 + 8 H(+)(in) = 4 Fe(III)-[cytochrome c] + 2 H2O + 4 H(+)(out). It functions in the pathway energy metabolism; oxidative phosphorylation. Its function is as follows. Component of the cytochrome c oxidase, the last enzyme in the mitochondrial electron transport chain which drives oxidative phosphorylation. The respiratory chain contains 3 multisubunit complexes succinate dehydrogenase (complex II, CII), ubiquinol-cytochrome c oxidoreductase (cytochrome b-c1 complex, complex III, CIII) and cytochrome c oxidase (complex IV, CIV), that cooperate to transfer electrons derived from NADH and succinate to molecular oxygen, creating an electrochemical gradient over the inner membrane that drives transmembrane transport and the ATP synthase. Cytochrome c oxidase is the component of the respiratory chain that catalyzes the reduction of oxygen to water. Electrons originating from reduced cytochrome c in the intermembrane space (IMS) are transferred via the dinuclear copper A center (CU(A)) of COX2 and heme A of COX1 to the active site in COX1, a binuclear center (BNC) formed by heme A3 and copper B (CU(B)). The BNC reduces molecular oxygen to 2 water molecules using 4 electrons from cytochrome c in the IMS and 4 protons from the mitochondrial matrix. COX1 is a catalytic core subunit containing heme A and the active site BNC with heme A3 and the copper atom CU(B). The chain is Cytochrome c oxidase subunit 1 (COX1) from Saccharomyces cerevisiae (strain ATCC 204508 / S288c) (Baker's yeast).